The sequence spans 205 residues: MKMIIGRKLGMTRVFVGDKVVPVTVIKAGPCFVVQKKTIETDGYNAVQLGFEEAKKVNKPMEGVFKKAGVNPLKVLKEFRVEDPDKFEVGQEIKVDIFSEGDKIDITGWSKGRGFAGAMKRWGFRGGPKSHGAKFHRELGSVGQHSEPARIFKGKKMPGQYGNERVTILNSEIVKIDVENNLIAVKGGVPGARGGLVLIKSAKRG.

It belongs to the universal ribosomal protein uL3 family. In terms of assembly, part of the 50S ribosomal subunit. Forms a cluster with proteins L14 and L19.

Functionally, one of the primary rRNA binding proteins, it binds directly near the 3'-end of the 23S rRNA, where it nucleates assembly of the 50S subunit. The sequence is that of Large ribosomal subunit protein uL3 from Thermosipho melanesiensis (strain DSM 12029 / CIP 104789 / BI429).